The chain runs to 254 residues: Nickel import ATP-binding protein NikO (254 aa).

Residues 5–246 (FELQGVQFAY…TALLRRARLL (242 aa)) enclose the ABC transporter domain. 37–44 (GANGSGKS) contacts ATP.

Belongs to the ABC transporter superfamily. As to quaternary structure, forms an energy-coupling factor (ECF) transporter complex composed of an ATP-binding protein (A component, NikO), a transmembrane protein (T component, NikQ) and a fused possible substrate-capture protein (S component, NikMN) of unknown stoichimetry.

Its subcellular location is the cell inner membrane. The catalysed reaction is Ni(2+)(out) + ATP + H2O = Ni(2+)(in) + ADP + phosphate + H(+). In terms of biological role, part of the energy-coupling factor (ECF) transporter complex NikMNQO involved in nickel import. The complex confers nickel uptake upon expression in E.coli. Shows very low activity with cobalt. Presumably responsible for energy coupling to the transport system. The sequence is that of Nickel import ATP-binding protein NikO from Rhodobacter capsulatus (strain ATCC BAA-309 / NBRC 16581 / SB1003).